The primary structure comprises 315 residues: Calcium homeostasis modulator protein 4 (315 aa).

Topologically, residues M1–R14 are cytoplasmic. A helical membrane pass occupies residues S15–Y37. The Extracellular portion of the chain corresponds to T38–N48. 2 disulfide bridges follow: C41–C132 and C43–C163. The chain crosses the membrane as a helical span at residues F49–R71. Over G72 to M104 the chain is Cytoplasmic. A helical transmembrane segment spans residues F105–Y130. At E131–Y184 the chain is on the extracellular side. A helical membrane pass occupies residues Q185–A208. Over R209–P315 the chain is Cytoplasmic.

Belongs to the CALHM family. Oligomerizes to form decameric and undecameric channels. Two hemichannels can assemble in a tail-to-tail manner to form a gap junction.

The protein localises to the cell membrane. Its function is as follows. May assemble to form gap junction channel-like structures involved in intercellular communication. Channel gating and ion conductance are likely regulated by membrane lipids rather than by membrane depolarization or extracellular calcium levels. The polypeptide is Calcium homeostasis modulator protein 4 (Mus musculus (Mouse)).